Here is a 715-residue protein sequence, read N- to C-terminus: Polyribonucleotide nucleotidyltransferase (715 aa).

Mg(2+)-binding residues include D495 and D501. The KH domain maps to 562–621; the sequence is PRLLTLQIPPDMIGLVIGPGGKTVRGISEQYNVKVDISEEGLVTITAPNETNAKQARAAI. One can recognise an S1 motif domain in the interval 631–699; the sequence is GDVYLGRVTR…SKGRINLTRL (69 aa).

It belongs to the polyribonucleotide nucleotidyltransferase family. Mg(2+) is required as a cofactor.

It localises to the cytoplasm. It catalyses the reaction RNA(n+1) + phosphate = RNA(n) + a ribonucleoside 5'-diphosphate. Involved in mRNA degradation. Catalyzes the phosphorolysis of single-stranded polyribonucleotides processively in the 3'- to 5'-direction. In Thermosynechococcus vestitus (strain NIES-2133 / IAM M-273 / BP-1), this protein is Polyribonucleotide nucleotidyltransferase.